The chain runs to 67 residues: Protein C' (67 aa).

It belongs to the rhabdoviruses C protein family.

Functionally, seems to stimulates transcription by the viral polymerase. May play a role in viral pathogenesis or transmission by insects vectors. This is Protein C' (P) from Vesicular stomatitis Indiana virus (strain 98COE North America) (VSIV).